The following is a 318-amino-acid chain: Sucrose operon repressor (318 aa).

An HTH lacI-type domain is found at 1 to 56; that stretch reads MIKLEDVANKAGVSVTTVSRVINRKGYLSDATISKVEKAMQDLHYIPNAAARSLQG. A DNA-binding region (H-T-H motif) is located at residues 4–23; that stretch reads LEDVANKAGVSVTTVSRVIN.

Functionally, this protein may control the expression of the genes that are involved in the transport and catabolism of sucrose. This chain is Sucrose operon repressor (sacR), found in Lactococcus lactis subsp. lactis (Streptococcus lactis).